The chain runs to 79 residues: Conotoxin VnMKLT1-01122 (79 aa).

An N-terminal signal peptide occupies residues 1-22 (MKLTCMKIVAVLFLTAWTFVTA). Residues 23-48 (DDSRNGLEYLFPKAHYEMNPEASKLN) constitute a propeptide that is removed on maturation. Pyrrolidone carboxylic acid is present on Q51. Intrachain disulfides connect C53/C70, C60/C74, and C69/C78.

The protein belongs to the conotoxin O1 superfamily. As to expression, expressed by the venom duct.

The protein localises to the secreted. This is Conotoxin VnMKLT1-01122 from Conus ventricosus (Mediterranean cone).